A 387-amino-acid chain; its full sequence is Probable G-protein coupled receptor 173 (387 aa).

Over 1–40 (MANGNASSDGPGNPLAAVVSTTGGVMGGAPSSAVSTYVKL) the chain is Extracellular. The N-linked (GlcNAc...) asparagine glycan is linked to Asn-5. Residues 41-61 (VLLGLIICISLVGNLVVSLLV) form a helical membrane-spanning segment. Residues 62-87 (LRDRALHKAPYYFLLDLCLADTIRSA) are Cytoplasmic-facing. Residues 88–108 (VCFPFVLVSIKNGSAWTYSVL) traverse the membrane as a helical segment. At 109-111 (SCK) the chain is on the extracellular side. Cys-110 and Cys-188 are joined by a disulfide. A helical membrane pass occupies residues 112–132 (VVAFMAVLFCFHAAFMLFCIS). The Cytoplasmic segment spans residues 133 to 153 (VTRYMAIAHHRFYSKRMTFWT). The helical transmembrane segment at 154-174 (CVAVVCMVWTLSVAMAFPPVF) threads the bilayer. At 175–202 (DVGTYKFIREEDQCIFEHRYFKANDTLG) the chain is on the extracellular side. Asn-198 carries N-linked (GlcNAc...) asparagine glycosylation. A helical membrane pass occupies residues 203 to 223 (FMLMLAVLILATHVVYMKLLL). At 224 to 301 (FEYKHRKMKP…FKAEKQLGRM (78 aa)) the chain is on the cytoplasmic side. Residues 302–322 (FYVITLFFLVLWSPYIVACYW) form a helical membrane-spanning segment. Over 323–335 (RVFVKACTIPHRY) the chain is Extracellular. A helical membrane pass occupies residues 336 to 356 (LSTTVWMSFAQAGVNPIICFF). The Cytoplasmic segment spans residues 357–387 (LNKDLKKGLLAHLPPCCRTPPQLPREPYCVM).

It belongs to the G-protein coupled receptor 1 family.

Its subcellular location is the cell membrane. Is a receptor for the SMIM20 derived peptides Phoenixin-14 and Phoenixin-20. It mediates the Phoenixin-14 and Phoenixin-20 augmentation of gonadotropin-releasing hormone (GNRH) signaling in the hypothalamus and pituitary gland. In the ovary, it mediates the effects of Phoenixin-14 and Phoenixin-20 induced granulosa cell proliferation during follicular growth. This is Probable G-protein coupled receptor 173 (gpr173) from Danio rerio (Zebrafish).